A 172-amino-acid chain; its full sequence is Diphosphoinositol polyphosphate phosphohydrolase 1 (172 aa).

Position 1 is an N-acetylmethionine (methionine 1). Substrate-binding positions include arginine 10, 18–20 (KKR), and 39–41 (SSR). The Nudix hydrolase domain occupies 17 to 142 (YKKRAACLCF…KPVQASYFET (126 aa)). Mg(2+) contacts are provided by glycine 50 and glutamate 66. Positions 51–72 (GGMEPEEEPSVAAVREVCEEAG) match the Nudix box motif. Glutamate 69 serves as the catalytic Proton acceptor. Residue glutamate 70 participates in Mg(2+) binding. Residues 89-91 (RKH), arginine 115, and lysine 133 contribute to the substrate site.

The protein belongs to the Nudix hydrolase family. DIPP subfamily. Monomer. Requires Mg(2+) as cofactor. It depends on Mn(2+) as a cofactor. Zn(2+) is required as a cofactor. In terms of tissue distribution, widely expressed. Expressed at higher level in brain, heart, pancreas and liver. Also expressed in placenta, lung and kidney.

It is found in the cytoplasm. The protein resides in the nucleus. The enzyme catalyses diphospho-myo-inositol polyphosphate + H2O = myo-inositol polyphosphate + phosphate.. It catalyses the reaction 5-diphospho-1D-myo-inositol 1,2,3,4,6-pentakisphosphate + H2O = 1D-myo-inositol hexakisphosphate + phosphate + H(+). It carries out the reaction 3,5-bis(diphospho)-1D-myo-inositol 1,2,4,6-tetrakisphosphate + H2O = 3-diphospho-1D-myo-inositol 1,2,4,5,6-pentakisphosphate + phosphate + 2 H(+). The catalysed reaction is [phosphate](n+1) + n H2O = (n+1) phosphate + n H(+). The enzyme catalyses P(1),P(5)-bis(5'-adenosyl) pentaphosphate + H2O = ADP + ATP + 2 H(+). It catalyses the reaction P(1),P(6)-bis(5'-adenosyl) hexaphosphate + H2O = 2 ATP + 2 H(+). It carries out the reaction P(1),P(4)-bis(5'-adenosyl) tetraphosphate + H2O = AMP + ATP + 2 H(+). The catalysed reaction is a 5'-end (N(7)-methyl 5'-triphosphoguanosine)-ribonucleoside in mRNA + H2O = N(7)-methyl-GMP + a 5'-end diphospho-ribonucleoside in mRNA + 2 H(+). The enzyme catalyses a 5'-end (N(7)-methyl 5'-triphosphoguanosine)-ribonucleoside in mRNA + H2O = N(7)-methyl-GDP + a 5'-end phospho-ribonucleoside in mRNA + 2 H(+). Endopolyphospahatase activity is inhibited by NaF, NaPPi, beta-glycerol phosphate and heparin. 5-diphosphoinositol pentakisphosphate (5-InsP7) inhibits its mRNA decapping activity. In terms of biological role, cleaves a beta-phosphate from the diphosphate groups in PP-InsP5 (diphosphoinositol pentakisphosphate) and [PP]2-InsP4 (bisdiphosphoinositol tetrakisphosphate), suggesting that it may play a role in signal transduction. InsP6 (inositol hexakisphosphate) is not a substrate. Acts as a negative regulator of the ERK1/2 pathway. Also able to catalyze the hydrolysis of dinucleoside oligophosphates, with diadenosine 5',5'''-P1,P6-hexaphosphate (Ap6A) and diadenosine 5',5'''- P1,P5-pentaphosphate (Ap5A) being the preferred substrates. The major reaction products are ADP and p4a from Ap6A and ADP and ATP from Ap5A. Also able to hydrolyze 5-phosphoribose 1-diphosphate. Acts as a decapping enzyme that modulates the stability of a subset of mRNAs implicated in cell motility. Hydrolyzes monomethylated capped RNA after both the alpha- and beta-phosphates generating m7GMP + ppRNA and m7GDP + pRNA. Can hydrolyze unmethylated capped RNAs. Divalent cations zinc, magnesium and manganese determine its substrate specificity. Exhibits diphosphoinositol polyphosphate phosphohydrolase in the presence of magnesium ions, diadenosine hexaphosphate hydrolase activity in the presence of manganese ions and endopolyphosphatase activity in the presence of zinc ions. Plays an important role in limiting DNA damage and maintaining cell survival upon oxidative stress via its endopolyphosphatase activity. The chain is Diphosphoinositol polyphosphate phosphohydrolase 1 from Homo sapiens (Human).